The chain runs to 701 residues: Low-density lipoprotein receptor-related protein 12 (701 aa).

At 1–334 (GKSEEPNCAC…ENCPVIVPTR (334 aa)) the chain is on the extracellular side. LDL-receptor class A domains are found at residues 7–43 (NCAC…EICA) and 56–97 (PCAY…IDCD). Cystine bridges form between cysteine 8–cysteine 20, cysteine 15–cysteine 33, cysteine 27–cysteine 42, cysteine 57–cysteine 74, cysteine 64–cysteine 87, cysteine 81–cysteine 96, and cysteine 101–cysteine 127. In terms of domain architecture, CUB spans 101 to 214 (CGQWLKYFYG…RGFNATYQVD (114 aa)). Asparagine 126 and asparagine 208 each carry an N-linked (GlcNAc...) asparagine glycan. LDL-receptor class A domains follow at residues 216-253 (FCLP…INCT), 254-291 (MCQK…KNCF), and 292-328 (FCQP…ENCP). Cystine bridges form between cysteine 217-cysteine 230, cysteine 224-cysteine 243, cysteine 237-cysteine 252, cysteine 255-cysteine 268, cysteine 262-cysteine 281, cysteine 275-cysteine 290, cysteine 293-cysteine 305, cysteine 300-cysteine 318, and cysteine 312-cysteine 327. Asparagine 251 is a glycosylation site (N-linked (GlcNAc...) asparagine). N-linked (GlcNAc...) asparagine glycosylation is present at asparagine 283. Residues 335 to 355 (VITAAVIGSLICGLLLVIALG) traverse the membrane as a helical segment. At 356–701 (CTCKLYSLRM…TSDDEALLLC (346 aa)) the chain is on the cytoplasmic side. 4 disordered regions span residues 465–520 (ADGD…LPQK), 535–565 (ASSS…SPAR), 590–612 (SSVS…REDD), and 643–665 (DQGQ…SNRD). Polar residues-rich tracts occupy residues 590 to 599 (SSVSQNQSPL) and 643 to 656 (DQGQ…SATN).

Belongs to the LDLR family. As to quaternary structure, may interact with RACK1, ZFYVE9 and NMRK2.

It is found in the membrane. It localises to the coated pit. Probable receptor, which may be involved in the internalization of lipophilic molecules and/or signal transduction. May act as a tumor suppressor. This Macaca fascicularis (Crab-eating macaque) protein is Low-density lipoprotein receptor-related protein 12 (LRP12).